The chain runs to 165 residues: Pyruvoyl-dependent arginine decarboxylase 1 (165 aa).

Residue Ser-45 is modified to Pyruvic acid (Ser).

This sequence belongs to the PdaD family. Requires pyruvate as cofactor.

The catalysed reaction is L-arginine + H(+) = agmatine + CO2. The chain is Pyruvoyl-dependent arginine decarboxylase 1 (pdaD1) from Methanosarcina acetivorans (strain ATCC 35395 / DSM 2834 / JCM 12185 / C2A).